Consider the following 246-residue polypeptide: Probable transcriptional regulatory protein ORF2U (246 aa).

Belongs to the TACO1 family.

The protein resides in the cytoplasm. The protein is Probable transcriptional regulatory protein ORF2U of Hathewaya histolytica (Clostridium histolyticum).